A 293-amino-acid polypeptide reads, in one-letter code: Sodium-type flagellar protein MotY (293 aa).

Positions 1–21 (MNKWLITSGVMLSLLSANSYA) are cleaved as a signal peptide. In terms of domain architecture, OmpA-like spans 175–292 (YSFEDIAFTI…RVVISLGRTQ (118 aa)).

Its subcellular location is the cell membrane. Its function is as follows. May play the role of a stator in the sodium flagellar motor, stabilizing the force-generating unit through direct interaction with the cell wall. The sequence is that of Sodium-type flagellar protein MotY from Vibrio parahaemolyticus serotype O3:K6 (strain RIMD 2210633).